The primary structure comprises 254 residues: N-acetylglucosamine-induced protein 1 (254 aa).

It localises to the cytoplasm. N-acetylglucosamine-induced protein which plays a role in the N-acetylglucosamine metabolic pathway. The polypeptide is N-acetylglucosamine-induced protein 1 (Candida albicans (strain SC5314 / ATCC MYA-2876) (Yeast)).